We begin with the raw amino-acid sequence, 485 residues long: Cysteine--tRNA ligase (485 aa).

Cys-29 is a Zn(2+) binding site. A 'HIGH' region motif is present at residues 31-41 (VTVYDHCHIGH). 3 residues coordinate Zn(2+): Cys-209, His-234, and Glu-238. Residues 266-270 (KMSKS) carry the 'KMSKS' region motif. Lys-269 provides a ligand contact to ATP.

The protein belongs to the class-I aminoacyl-tRNA synthetase family. As to quaternary structure, monomer. It depends on Zn(2+) as a cofactor.

It localises to the cytoplasm. The enzyme catalyses tRNA(Cys) + L-cysteine + ATP = L-cysteinyl-tRNA(Cys) + AMP + diphosphate. In Geobacter metallireducens (strain ATCC 53774 / DSM 7210 / GS-15), this protein is Cysteine--tRNA ligase.